A 246-amino-acid polypeptide reads, in one-letter code: Bis(5'-nucleosyl)-tetraphosphatase PrpE [asymmetrical] (246 aa).

Belongs to the PrpE family. The cofactor is Ni(2+).

It carries out the reaction P(1),P(4)-bis(5'-guanosyl) tetraphosphate + H2O = GMP + GTP + 2 H(+). In terms of biological role, asymmetrically hydrolyzes Ap4p to yield AMP and ATP. The sequence is that of Bis(5'-nucleosyl)-tetraphosphatase PrpE [asymmetrical] from Bacillus cereus (strain ATCC 10987 / NRS 248).